Reading from the N-terminus, the 225-residue chain is Ribonuclease 3 (225 aa).

Residues 5-127 (VTELYKTIDY…IIGAVFLDSD (123 aa)) enclose the RNase III domain. E40 contributes to the Mg(2+) binding site. D44 is a catalytic residue. 2 residues coordinate Mg(2+): D113 and E116. The active site involves E116. The DRBM domain occupies 154 to 223 (DPKTLLQEHL…AEKALKILKN (70 aa)).

Belongs to the ribonuclease III family. In terms of assembly, homodimer. It depends on Mg(2+) as a cofactor.

Its subcellular location is the cytoplasm. The catalysed reaction is Endonucleolytic cleavage to 5'-phosphomonoester.. In terms of biological role, digests double-stranded RNA. Involved in the processing of primary rRNA transcript to yield the immediate precursors to the large and small rRNAs (23S and 16S). Processes some mRNAs, and tRNAs when they are encoded in the rRNA operon. Processes pre-crRNA and tracrRNA of type II CRISPR loci if present in the organism. This chain is Ribonuclease 3, found in Pseudoalteromonas translucida (strain TAC 125).